Reading from the N-terminus, the 188-residue chain is dCTP deaminase (188 aa).

DCTP is bound by residues 111–116 (KSTYAR), 135–137 (TLE), Q156, Y170, K179, and Q180. The active-site Proton donor/acceptor is the E137.

This sequence belongs to the dCTP deaminase family. Homotrimer.

The catalysed reaction is dCTP + H2O + H(+) = dUTP + NH4(+). The protein operates within pyrimidine metabolism; dUMP biosynthesis; dUMP from dCTP (dUTP route): step 1/2. In terms of biological role, catalyzes the deamination of dCTP to dUTP. This is dCTP deaminase from Orientia tsutsugamushi (strain Ikeda) (Rickettsia tsutsugamushi).